Reading from the N-terminus, the 723-residue chain is MAAPSLLNWRRVSSFTGPVPRARHGHRAVAIRELMIIFGGGNEGIADELHVYNTVTNQWFLPAVRGDIPPGCAAHGFVCDGTRILVFGGMVEYGRYSNELYELQASRWLWKKVKPQPPPSGLPPCPRLGHSFSLYGNKCYLFAGLANESEDSNNNVPRYLNDFYELELQHGSGVVGWSVPATKGTVPSPRESHTAVIYCKRDSGSPKMYVFGGMCGARLDDLWQLDLETMSWSKPETKGTVPLPRSLHTASVIGNKMYIFGGWVPHKGENTENSPHDCEWRCTSSFSYLNLDTAEWTTLVSDSQEDKKNSRPRPRAGHCAVAIGTRLYFWSGRDGYKKALNSQVCCKDLWYLDTEKPPAPSQVQLIKATTNSFHVKWDEVPTVEGYLLQLNTDLTHQAASPDASAAPNTLGGRTDPHRQGSNSILHNSVSDPANCTKPEHTAVAARGMSLKSKPDSRAADSSVALHSPLAPNTSNNNSCMADMLWKSEVDEICALPATKISRVEAHAAATPFSKETPSNPVAILKAEQWCDVGIFKNNTALVSQFYLLPKGKQSMSKVGNADVPDYSLLKKQDLVPGTVYKFRVAAINGCGIGPFSKLSEFKTCIPGFPGAPSTVRISKNVEGIHLSWEPPTSPSGNILEYSAYLAIRTAQVQDNPSQLVFMRIYCGLKTSCIVTAGQLANAHIDYTSRPAIVFRISAKNEKGYGPATQVRWLQGNSKKAPLS.

Kelch repeat units follow at residues 34–79, 83–130, 207–255, and 257–305; these read LMII…GFVC, RILV…RLGH, KMYV…VIGN, and MYIF…DSQE. Fibronectin type-III domains lie at 357–436, 516–606, and 608–720; these read PPAP…ANCT, TPSN…TCIP, and FPGA…SKKA. Positions 398–472 are disordered; sequence AASPDASAAP…VALHSPLAPN (75 aa). The segment covering 419 to 433 has biased composition (polar residues); the sequence is QGSNSILHNSVSDPA.

As to quaternary structure, binds KMT2A/MLL1. Component of the MLL1/MLL complex, at least composed of KMT2A/MLL1, ASH2L, RBBP5, DPY30, WDR5, MEN1, HCFC1 and HCFC2. Interacts with TASOR.

The protein resides in the cytoplasm. Its subcellular location is the nucleus. The sequence is that of Host cell factor 2 (Hcfc2) from Rattus norvegicus (Rat).